Consider the following 1608-residue polypeptide: DNA-directed RNA polymerase III subunit rpc2 (1608 aa).

The Zn(2+) site is built by cysteine 1557, cysteine 1560, cysteine 1569, and cysteine 1572. The C4-type zinc finger occupies 1557-1572 (CKNCGFLGYEGYCQYC).

It belongs to the RNA polymerase beta chain family. As to quaternary structure, component of the RNA polymerase III (Pol III) complex. This protein undergoes a protein self splicing that involves a post-translational excision of the intervening region (intein) followed by peptide ligation.

It localises to the nucleus. It carries out the reaction RNA(n) + a ribonucleoside 5'-triphosphate = RNA(n+1) + diphosphate. Functionally, DNA-dependent RNA polymerase catalyzes the transcription of DNA into RNA using the four ribonucleoside triphosphates as substrates. Second largest core component of RNA polymerase III which synthesizes small RNAs, such as 5S rRNA and tRNAs. Proposed to contribute to the polymerase catalytic activity and forms the polymerase active center together with the largest subunit. Pol III is composed of mobile elements and rpc2 is part of the core element with the central large cleft and probably a clamp element that moves to open and close the cleft. In Dictyostelium discoideum (Social amoeba), this protein is DNA-directed RNA polymerase III subunit rpc2 (polr3b).